Here is a 374-residue protein sequence, read N- to C-terminus: Ribosomal RNA large subunit methyltransferase G (374 aa).

Belongs to the methyltransferase superfamily. RlmG family.

It is found in the cytoplasm. The enzyme catalyses guanosine(1835) in 23S rRNA + S-adenosyl-L-methionine = N(2)-methylguanosine(1835) in 23S rRNA + S-adenosyl-L-homocysteine + H(+). Its function is as follows. Specifically methylates the guanine in position 1835 (m2G1835) of 23S rRNA. The chain is Ribosomal RNA large subunit methyltransferase G from Pseudomonas putida (strain W619).